A 798-amino-acid polypeptide reads, in one-letter code: Cadherin-20 (798 aa).

The first 35 residues, 1 to 35 (MWTSGRMSNAKNLFGLGVSLYFWGLMDLTTTVLSG), serve as a signal peptide directing secretion. A propeptide spanning residues 36-58 (SARPLTEGPEDNLSDKLHQRMKR) is cleaved from the precursor. N47 carries N-linked (GlcNAc...) asparagine glycosylation. The Extracellular portion of the chain corresponds to 59–618 (SWVWNQFFVL…AYVLPVSLSR (560 aa)). 5 consecutive Cadherin domains span residues 60 to 164 (WVWN…EPKF), 165 to 273 (LDGP…PPRF), 274 to 392 (PQKH…EPSF), 389 to 493 (EPSF…APEF), and 493 to 615 (FARF…LPVS). Residues 88–90 (RGD) carry the Cell attachment site motif. N260 carries N-linked (GlcNAc...) asparagine glycosylation. 3 N-linked (GlcNAc...) asparagine glycosylation sites follow: N419, N460, and N541. The helical transmembrane segment at 619 to 639 (GALIAILACIFVLLVLVLLIL) threads the bilayer. Topologically, residues 640-798 (SMRRQRKQPY…GATDSSGALW (159 aa)) are cytoplasmic.

As to expression, detected in embryonic spinal cord, in the brachial and lumbar section of motor neurons (at protein level). Detected in ventro-lateral portion of embryonic spinal cord, in the brachial and lumbar section of embryonic motor neurons. Detected in embryonic adductor motor neurons and embryonic dorsal root ganglion. Detected in the caudal half of newly generated somites and in presomitic mesoderm.

It is found in the cell membrane. Its function is as follows. Cadherins are calcium-dependent cell adhesion proteins. They preferentially interact with themselves in a homophilic manner in connecting cells; cadherins may thus contribute to the sorting of heterogeneous cell types. In Gallus gallus (Chicken), this protein is Cadherin-20 (CDH20).